Consider the following 530-residue polypeptide: Glutamyl-tRNA reductase 2, chloroplastic (530 aa).

The transit peptide at 1–64 (MAVSSAFVVT…RCEISPSNKA (64 aa)) directs the protein to the chloroplast. Residues 134 to 137 (TCNR), Ser-194, 199 to 201 (EGQ), and Gln-205 each bind substrate. The active-site Nucleophile is Cys-135. 277–282 (GAGKMG) serves as a coordination point for NADP(+).

This sequence belongs to the glutamyl-tRNA reductase family. As to expression, expressed in roots and flowers. Detected in leaves, hypocotyls and cotyledons.

Its subcellular location is the plastid. It localises to the chloroplast. It catalyses the reaction (S)-4-amino-5-oxopentanoate + tRNA(Glu) + NADP(+) = L-glutamyl-tRNA(Glu) + NADPH + H(+). Its pathway is porphyrin-containing compound metabolism; protoporphyrin-IX biosynthesis; 5-aminolevulinate from L-glutamyl-tRNA(Glu): step 1/2. It participates in porphyrin-containing compound metabolism; chlorophyll biosynthesis. Its function is as follows. Catalyzes the NADPH-dependent reduction of glutamyl-tRNA(Glu) to glutamate 1-semialdehyde (GSA). Probably involved in wound-induced supply of heme to defensive hemoproteins outside plastids. In Arabidopsis thaliana (Mouse-ear cress), this protein is Glutamyl-tRNA reductase 2, chloroplastic (HEMA2).